Consider the following 119-residue polypeptide: Fluoride-specific ion channel FluC (119 aa).

A run of 3 helical transmembrane segments spans residues 37–54 (LFAN…AETV), 61–83 (LLLI…ETVT), and 93–112 (ALSN…WLGL). 2 residues coordinate Na(+): Gly69 and Thr72.

This sequence belongs to the fluoride channel Fluc/FEX (TC 1.A.43) family.

Its subcellular location is the cell inner membrane. It catalyses the reaction fluoride(in) = fluoride(out). Na(+) is not transported, but it plays an essential structural role and its presence is essential for fluoride channel function. In terms of biological role, fluoride-specific ion channel. Important for reducing fluoride concentration in the cell, thus reducing its toxicity. This Neisseria meningitidis serogroup C (strain 053442) protein is Fluoride-specific ion channel FluC.